We begin with the raw amino-acid sequence, 463 residues long: tRNA (guanine(10)-N(2))-methyltransferase TRMT11 (463 aa).

Position 2 is an N-acetylalanine (A2).

It belongs to the class I-like SAM-binding methyltransferase superfamily. TRM11 methyltransferase family. In terms of assembly, part of the heterodimeric TRMT11-TRM112 methyltransferase complex; this complex forms an active tRNA methyltransferase, where TRMT112 acts as an activator of the catalytic subunit TRMT11.

It localises to the cytoplasm. The enzyme catalyses guanosine(10) in tRNA + S-adenosyl-L-methionine = N(2)-methylguanosine(10) in tRNA + S-adenosyl-L-homocysteine + H(+). Catalytic subunit of the TRMT11-TRM112 methyltransferase complex, that specifically mediates the S-adenosyl-L-methionine-dependent N(2)-methylation of guanosine nucleotide at position 10 (m2G10) in tRNAs. This is one of the major tRNA (guanine-N(2))-methyltransferases. The chain is tRNA (guanine(10)-N(2))-methyltransferase TRMT11 from Rattus norvegicus (Rat).